Consider the following 144-residue polypeptide: Small ribosomal subunit protein uS12 (144 aa).

Aspartate 103 is modified (3-methylthioaspartic acid). Residues 121 to 144 (VANRKQGRSKYGTKKASAVPAKKK) form a disordered region.

It belongs to the universal ribosomal protein uS12 family. Part of the 30S ribosomal subunit. Contacts proteins S8 and S17. May interact with IF1 in the 30S initiation complex.

Functionally, with S4 and S5 plays an important role in translational accuracy. In terms of biological role, interacts with and stabilizes bases of the 16S rRNA that are involved in tRNA selection in the A site and with the mRNA backbone. Located at the interface of the 30S and 50S subunits, it traverses the body of the 30S subunit contacting proteins on the other side and probably holding the rRNA structure together. The combined cluster of proteins S8, S12 and S17 appears to hold together the shoulder and platform of the 30S subunit. The polypeptide is Small ribosomal subunit protein uS12 (Roseiflexus castenholzii (strain DSM 13941 / HLO8)).